Here is a 185-residue protein sequence, read N- to C-terminus: MAAGVQGESVARNYAEALLVLARKADDAEGWGALLRQVADAINNDVNLSRFLESPRIAAEQKSVVLSKALGDKVPHLFLRFLQQLVKNRRQMLIPAIATEYETLRDAASGIVHARVTVARETGDEEAKMIAERLSKATGKTVVPHFAVDPSILGGVVVRVGDTVMDGSLRRKLGMLRRRMGGTRA.

Belongs to the ATPase delta chain family. F-type ATPases have 2 components, F(1) - the catalytic core - and F(0) - the membrane proton channel. F(1) has five subunits: alpha(3), beta(3), gamma(1), delta(1), epsilon(1). F(0) has three main subunits: a(1), b(2) and c(10-14). The alpha and beta chains form an alternating ring which encloses part of the gamma chain. F(1) is attached to F(0) by a central stalk formed by the gamma and epsilon chains, while a peripheral stalk is formed by the delta and b chains.

It localises to the cell inner membrane. F(1)F(0) ATP synthase produces ATP from ADP in the presence of a proton or sodium gradient. F-type ATPases consist of two structural domains, F(1) containing the extramembraneous catalytic core and F(0) containing the membrane proton channel, linked together by a central stalk and a peripheral stalk. During catalysis, ATP synthesis in the catalytic domain of F(1) is coupled via a rotary mechanism of the central stalk subunits to proton translocation. Its function is as follows. This protein is part of the stalk that links CF(0) to CF(1). It either transmits conformational changes from CF(0) to CF(1) or is implicated in proton conduction. The sequence is that of ATP synthase subunit delta from Gemmatimonas aurantiaca (strain DSM 14586 / JCM 11422 / NBRC 100505 / T-27).